The following is a 732-amino-acid chain: 1,4-alpha-glucan branching enzyme GlgB (732 aa).

Asp-408 (nucleophile) is an active-site residue. Residue Glu-461 is the Proton donor of the active site.

It belongs to the glycosyl hydrolase 13 family. GlgB subfamily. In terms of assembly, monomer.

It catalyses the reaction Transfers a segment of a (1-&gt;4)-alpha-D-glucan chain to a primary hydroxy group in a similar glucan chain.. Its pathway is glycan biosynthesis; glycogen biosynthesis. Functionally, catalyzes the formation of the alpha-1,6-glucosidic linkages in glycogen by scission of a 1,4-alpha-linked oligosaccharide from growing alpha-1,4-glucan chains and the subsequent attachment of the oligosaccharide to the alpha-1,6 position. The chain is 1,4-alpha-glucan branching enzyme GlgB from Rhodococcus jostii (strain RHA1).